The chain runs to 745 residues: Receptor-type adenylate cyclase (745 aa).

Topologically, residues 1 to 341 (GELGQTDRFF…NEGALTRAQL (341 aa)) are extracellular. N-linked (GlcNAc...) asparagine glycosylation is found at Asn-15, Asn-50, Asn-189, and Asn-312. The chain crosses the membrane as a helical span at residues 342-362 (IGVVVGTIFAVLLLLALGIVL). Over 363–745 (CVALRNTRDN…GSDEVARTCV (383 aa)) the chain is Cytoplasmic. The Guanylate cyclase domain maps to 384 to 538 (TLIFTDIESS…RTPNLAARTE (155 aa)). 2 residues coordinate Mg(2+): Asp-389 and Asp-432.

It belongs to the adenylyl cyclase class-3 family. Mg(2+) serves as cofactor.

It is found in the cell membrane. It carries out the reaction ATP = 3',5'-cyclic AMP + diphosphate. Functionally, could act as a receptor for an unknown ligand. This is Receptor-type adenylate cyclase from Trypanosoma congolense.